A 306-amino-acid polypeptide reads, in one-letter code: Ribonuclease Z (306 aa).

Zn(2+) is bound by residues H63, H65, D67, H68, H141, D211, and H269. The active-site Proton acceptor is D67.

It belongs to the RNase Z family. As to quaternary structure, homodimer. Zn(2+) serves as cofactor.

It catalyses the reaction Endonucleolytic cleavage of RNA, removing extra 3' nucleotides from tRNA precursor, generating 3' termini of tRNAs. A 3'-hydroxy group is left at the tRNA terminus and a 5'-phosphoryl group is left at the trailer molecule.. Functionally, zinc phosphodiesterase, which displays some tRNA 3'-processing endonuclease activity. Probably involved in tRNA maturation, by removing a 3'-trailer from precursor tRNA. The polypeptide is Ribonuclease Z (Staphylococcus aureus (strain USA300)).